The primary structure comprises 209 residues: Glutathione S-transferase 1-1 (209 aa).

The 81-residue stretch at 1 to 81 folds into the GST N-terminal domain; it reads MADFYYLPGS…YLVEKYGKTD (81 aa). Residues 51 to 53 and 65 to 67 contribute to the glutathione site; these read HTI and ESR. Residues 87–209 form the GST C-terminal domain; the sequence is CPKKRAVINQ…GCLEFKKYFE (123 aa).

This sequence belongs to the GST superfamily. Theta family. As to quaternary structure, homodimer.

The enzyme catalyses RX + glutathione = an S-substituted glutathione + a halide anion + H(+). Conjugation of reduced glutathione to a wide number of exogenous and endogenous hydrophobic electrophiles. This Drosophila yakuba (Fruit fly) protein is Glutathione S-transferase 1-1 (GstD1).